Consider the following 286-residue polypeptide: MELILSTSPAELTLDPACQPKLPLDSTCQPEMTFNPGPTELTLDPEHQPEETPAPSLAELTLEPVHRRPELLDACADLINDQWPRSRTSRLHSLGQSSDAFPLCLMLLSPHPTLEAAPVVVGHARLSRVLNQPQSLLVETVVVARALRGRGFGRRLMEGLEVFARARGFRKLHLTTHDQVHFYTHLGYQLGEPVQGLVFTSRRLPATLLNAFPTAPSPRPPRKAPNLTAQAAPRGPKGPPLPPPPPLPECLTISPPVPSGPPSKSLLETQYQNVRGRPIFWMEKDI.

Residues 33 to 54 are disordered; sequence TFNPGPTELTLDPEHQPEETPA. Positions 60–207 constitute an N-acetyltransferase domain; it reads LTLEPVHRRP…VFTSRRLPAT (148 aa). Residues Arg-85 and 90-93 contribute to the substrate site; that span reads RLHS. Acetyl-CoA is bound by residues 141 to 143, 149 to 154, and Gln-179; these read VVV and GRGFGR. The tract at residues 212-269 is disordered; that stretch reads FPTAPSPRPPRKAPNLTAQAAPRGPKGPPLPPPPPLPECLTISPPVPSGPPSKSLLET. Pro residues predominate over residues 236-248; the sequence is PKGPPLPPPPPLP.

This sequence belongs to the acetyltransferase family. As to expression, strongly expressed in heart and skeletal muscle, followed by brain and pancreas, with weak expression in kidney, liver, and lung and no expression in placenta.

The protein resides in the cytoplasm. It localises to the cytosol. It catalyses the reaction N-terminal L-aspartyl-L-aspartyl-L-aspartyl-[protein] + acetyl-CoA = N-terminal N-acetyl-L-aspartyl-L-aspartyl-L-aspartyl-[protein] + CoA + H(+). The enzyme catalyses N-terminal L-glutamyl-L-glutamyl-L-glutamyl-[protein] + acetyl-CoA = N-terminal N-acetyl-L-glutamyl-L-glutamyl-L-glutamyl-[protein] + CoA + H(+). Its function is as follows. N-alpha-acetyltransferase that specifically mediates the acetylation of the acidic amino terminus of processed forms of beta- and gamma-actin (ACTB and ACTG, respectively). N-terminal acetylation of processed beta- and gamma-actin regulates actin filament depolymerization and elongation. In vivo, preferentially displays N-terminal acetyltransferase activity towards acid N-terminal sequences starting with Asp-Asp-Asp and Glu-Glu-Glu. In vitro, shows high activity towards Met-Asp-Glu-Leu and Met-Asp-Asp-Asp. May act as a tumor suppressor. The sequence is that of N-alpha-acetyltransferase 80 from Homo sapiens (Human).